The primary structure comprises 414 residues: Serine hydroxymethyltransferase (414 aa).

Residues leucine 121 and 125-127 (GHL) each bind (6S)-5,6,7,8-tetrahydrofolate. The residue at position 229 (lysine 229) is an N6-(pyridoxal phosphate)lysine.

The protein belongs to the SHMT family. Homodimer. Requires pyridoxal 5'-phosphate as cofactor.

Its subcellular location is the cytoplasm. The enzyme catalyses (6R)-5,10-methylene-5,6,7,8-tetrahydrofolate + glycine + H2O = (6S)-5,6,7,8-tetrahydrofolate + L-serine. It participates in one-carbon metabolism; tetrahydrofolate interconversion. It functions in the pathway amino-acid biosynthesis; glycine biosynthesis; glycine from L-serine: step 1/1. Its function is as follows. Catalyzes the reversible interconversion of serine and glycine with tetrahydrofolate (THF) serving as the one-carbon carrier. This reaction serves as the major source of one-carbon groups required for the biosynthesis of purines, thymidylate, methionine, and other important biomolecules. Also exhibits THF-independent aldolase activity toward beta-hydroxyamino acids, producing glycine and aldehydes, via a retro-aldol mechanism. This is Serine hydroxymethyltransferase from Albidiferax ferrireducens (strain ATCC BAA-621 / DSM 15236 / T118) (Rhodoferax ferrireducens).